Consider the following 142-residue polypeptide: Large ribosomal subunit protein uL13 (142 aa).

Belongs to the universal ribosomal protein uL13 family. Part of the 50S ribosomal subunit.

In terms of biological role, this protein is one of the early assembly proteins of the 50S ribosomal subunit, although it is not seen to bind rRNA by itself. It is important during the early stages of 50S assembly. This Janthinobacterium sp. (strain Marseille) (Minibacterium massiliensis) protein is Large ribosomal subunit protein uL13.